Reading from the N-terminus, the 317-residue chain is Fe-S cluster assembly protein dre2 (317 aa).

Residues 22–152 (PVQAKRTLLL…KPNFEPSAAV (131 aa)) are N-terminal SAM-like domain. Positions 153–209 (PLKFGLKKKNKPTPTAVPSIPTGFAAPMGIDSPVTNHDRDEDDELINEDTLLSEEDL) are linker. C219, C230, C233, and C235 together coordinate [2Fe-2S] cluster. Residues 219-235 (CQPKTGRRRRACKDCTC) are fe-S binding site A. Residues C280, C283, C291, and C294 each coordinate [4Fe-4S] cluster. Short sequence motifs (cx2C motif) lie at residues 280–283 (CGSC) and 291–294 (CDGC). The tract at residues 280 to 294 (CGSCALGDAFRCDGC) is fe-S binding site B.

It belongs to the anamorsin family. Monomer. Interacts with tah18. Interacts with mia40. It depends on [2Fe-2S] cluster as a cofactor. Requires [4Fe-4S] cluster as cofactor.

It localises to the cytoplasm. The protein localises to the mitochondrion intermembrane space. Functionally, component of the cytosolic iron-sulfur (Fe-S) protein assembly (CIA) machinery required for the maturation of extramitochondrial Fe-S proteins. Part of an electron transfer chain functioning in an early step of cytosolic Fe-S biogenesis, facilitating the de novo assembly of a [4Fe-4S] cluster on the scaffold complex cfd1-nbp35. Electrons are transferred to dre2 from NADPH via the FAD- and FMN-containing protein tah18. Tah18-dre2 are also required for the assembly of the diferric tyrosyl radical cofactor of ribonucleotide reductase (RNR), probably by providing electrons for reduction during radical cofactor maturation in the catalytic small subunit rnr2. The protein is Fe-S cluster assembly protein dre2 of Penicillium rubens (strain ATCC 28089 / DSM 1075 / NRRL 1951 / Wisconsin 54-1255) (Penicillium chrysogenum).